The chain runs to 439 residues: Ribosomal protein uS12 methylthiotransferase RimO (439 aa).

Positions 2 to 114 (SKLYLMSLGC…IDEMILKKTN (113 aa)) constitute an MTTase N-terminal domain. 6 residues coordinate [4Fe-4S] cluster: C11, C45, C77, C146, C150, and C153. A Radical SAM core domain is found at 132–363 (TGSNSHAFIK…VDEVIEKSFE (232 aa)).

It belongs to the methylthiotransferase family. RimO subfamily. It depends on [4Fe-4S] cluster as a cofactor.

It is found in the cytoplasm. It carries out the reaction L-aspartate(89)-[ribosomal protein uS12]-hydrogen + (sulfur carrier)-SH + AH2 + 2 S-adenosyl-L-methionine = 3-methylsulfanyl-L-aspartate(89)-[ribosomal protein uS12]-hydrogen + (sulfur carrier)-H + 5'-deoxyadenosine + L-methionine + A + S-adenosyl-L-homocysteine + 2 H(+). Functionally, catalyzes the methylthiolation of an aspartic acid residue of ribosomal protein uS12. The chain is Ribosomal protein uS12 methylthiotransferase RimO from Campylobacter jejuni subsp. jejuni serotype O:6 (strain 81116 / NCTC 11828).